A 361-amino-acid chain; its full sequence is Holliday junction branch migration complex subunit RuvB (361 aa).

The span at 1-12 (MNWDETGPETDE) shows a compositional bias: acidic residues. A disordered region spans residues 1-21 (MNWDETGPETDEPTGPVLDDR). Residues 13 to 199 (PTGPVLDDRL…FGFTGHMEFY (187 aa)) are large ATPase domain (RuvB-L). Residues Leu38, Arg39, Gly80, Lys83, Thr84, Thr85, 146 to 148 (EDF), Arg189, Tyr199, and Arg236 contribute to the ATP site. Thr84 contributes to the Mg(2+) binding site. Residues 200 to 270 (APAELERVLH…IAMAALKVYE (71 aa)) form a small ATPAse domain (RuvB-S) region. A head domain (RuvB-H) region spans residues 273 to 361 (ARGLDRLDRA…AKGQQGLFGA (89 aa)). Arg309, Arg328, and Arg333 together coordinate DNA.

This sequence belongs to the RuvB family. Homohexamer. Forms an RuvA(8)-RuvB(12)-Holliday junction (HJ) complex. HJ DNA is sandwiched between 2 RuvA tetramers; dsDNA enters through RuvA and exits via RuvB. An RuvB hexamer assembles on each DNA strand where it exits the tetramer. Each RuvB hexamer is contacted by two RuvA subunits (via domain III) on 2 adjacent RuvB subunits; this complex drives branch migration. In the full resolvosome a probable DNA-RuvA(4)-RuvB(12)-RuvC(2) complex forms which resolves the HJ.

The protein resides in the cytoplasm. The catalysed reaction is ATP + H2O = ADP + phosphate + H(+). In terms of biological role, the RuvA-RuvB-RuvC complex processes Holliday junction (HJ) DNA during genetic recombination and DNA repair, while the RuvA-RuvB complex plays an important role in the rescue of blocked DNA replication forks via replication fork reversal (RFR). RuvA specifically binds to HJ cruciform DNA, conferring on it an open structure. The RuvB hexamer acts as an ATP-dependent pump, pulling dsDNA into and through the RuvAB complex. RuvB forms 2 homohexamers on either side of HJ DNA bound by 1 or 2 RuvA tetramers; 4 subunits per hexamer contact DNA at a time. Coordinated motions by a converter formed by DNA-disengaged RuvB subunits stimulates ATP hydrolysis and nucleotide exchange. Immobilization of the converter enables RuvB to convert the ATP-contained energy into a lever motion, pulling 2 nucleotides of DNA out of the RuvA tetramer per ATP hydrolyzed, thus driving DNA branch migration. The RuvB motors rotate together with the DNA substrate, which together with the progressing nucleotide cycle form the mechanistic basis for DNA recombination by continuous HJ branch migration. Branch migration allows RuvC to scan DNA until it finds its consensus sequence, where it cleaves and resolves cruciform DNA. In Streptomyces griseus subsp. griseus (strain JCM 4626 / CBS 651.72 / NBRC 13350 / KCC S-0626 / ISP 5235), this protein is Holliday junction branch migration complex subunit RuvB.